Here is a 30-residue protein sequence, read N- to C-terminus: Cyclotide cter-Q (30 aa).

The segment at residues 1 to 30 (GIPCGESCVFIPCISTVIGCSCKNKVCYRN) is a cross-link (cyclopeptide (Gly-Asn)). 3 disulfides stabilise this stretch: Cys-4/Cys-20, Cys-8/Cys-22, and Cys-13/Cys-27.

This is a cyclic peptide.

It is found in the secreted. Its function is as follows. Probably participates in a plant defense mechanism. This Clitoria ternatea (Butterfly pea) protein is Cyclotide cter-Q.